A 430-amino-acid polypeptide reads, in one-letter code: Acylsugar acyltransferase 3 (430 aa).

Active-site proton acceptor residues include His-155 and Asp-367.

It belongs to the plant acyltransferase family. Monomer. Expressed in tip cells of type I trichomes of stems and petioles, sites of acylsugars production.

In terms of biological role, catalyzes the transfer of short (four to five carbons) branched acyl chains to the furanose ring of di-acylsucrose acceptors to produce tri-acylsucroses such as S3:15 (5,5,5), S4:17 (2,5,5,5) and S4:24 (2,5,5,12) acylsucroses. The polypeptide is Acylsugar acyltransferase 3 (Solanum lycopersicum (Tomato)).